The chain runs to 175 residues: Large ribosomal subunit protein uL22 (175 aa).

The tract at residues 113 to 175 is disordered; the sequence is VESRPVKDQR…EASETKGGSD (63 aa). The segment covering 136 to 154 has biased composition (low complexity); the sequence is KTAGRAPAKKAGASSGATK. The segment covering 166 to 175 has biased composition (basic and acidic residues); the sequence is EASETKGGSD.

Belongs to the universal ribosomal protein uL22 family. Part of the 50S ribosomal subunit.

Functionally, this protein binds specifically to 23S rRNA; its binding is stimulated by other ribosomal proteins, e.g. L4, L17, and L20. It is important during the early stages of 50S assembly. It makes multiple contacts with different domains of the 23S rRNA in the assembled 50S subunit and ribosome. In terms of biological role, the globular domain of the protein is located near the polypeptide exit tunnel on the outside of the subunit, while an extended beta-hairpin is found that lines the wall of the exit tunnel in the center of the 70S ribosome. In Mycobacterium leprae (strain TN), this protein is Large ribosomal subunit protein uL22.